The chain runs to 30 residues: Putative cytochrome bd-II ubiquinol oxidase subunit AppX (30 aa).

The chain crosses the membrane as a helical span at residues 4–24; it reads LLWFVGILLMCSLSTLVLVWL.

The protein belongs to the cytochrome ubiquinol oxidase subunit X family. As to quaternary structure, able to interact with CydA and CydB upon overexpression.

It is found in the cell inner membrane. Its function is as follows. Might be part of cytochrome bd-II oxidase (appB and appC). Able to restore reductant resistance to a cydX deletion mutant upon overexpression. CydX and this protein may have some functional overlap. This chain is Putative cytochrome bd-II ubiquinol oxidase subunit AppX (appX), found in Escherichia coli (strain K12).